A 212-amino-acid chain; its full sequence is uncharacterized protein (212 aa).

In terms of domain architecture, NERD spans 29-146 (KGKAGEKLVK…AAFHPKCSLK (118 aa)).

This is an uncharacterized protein from Bacillus anthracis.